Here is a 146-residue protein sequence, read N- to C-terminus: uncharacterized protein (146 aa).

This is an uncharacterized protein from Aquifex aeolicus (strain VF5).